A 61-amino-acid chain; its full sequence is Large ribosomal subunit protein uL30 (61 aa).

The protein belongs to the universal ribosomal protein uL30 family. As to quaternary structure, part of the 50S ribosomal subunit.

This is Large ribosomal subunit protein uL30 from Latilactobacillus sakei subsp. sakei (strain 23K) (Lactobacillus sakei subsp. sakei).